The following is a 609-amino-acid chain: Chloride channel CLIC-like protein 1 (609 aa).

The first 25 residues, 1–25 (MKLSSSSSFGLCILVVFFCFVVIES), serve as a signal peptide directing secretion. 3 helical membrane passes run 212-235 (VSLI…SWFV), 241-260 (FAVS…YMLA), and 358-380 (VTLQ…YGSA). The tract at residues 398–553 (EQPPPAVGQR…PSSIDVKTVG (156 aa)) is disordered. Basic and acidic residues-rich tracts occupy residues 454–474 (ENRE…KRTP) and 507–537 (EEVK…DRSE). Low complexity predominate over residues 538–547 (PITSEPPSSI).

It belongs to the chloride channel MCLC family. As to expression, expressed in the hindbrain, swim bladder and the eye at 1 day post fertilization (dpf) with increased expression at 3 dpf. At 3 dpf, most prominent expression in the retina, with strong expression in the ganglion cell layer, outer nuclear layer and the retinal pigmented epithelium.

Its subcellular location is the endoplasmic reticulum membrane. It localises to the golgi apparatus membrane. The protein localises to the nucleus membrane. Seems to act as a chloride ion channel. Plays a role in retina development. The chain is Chloride channel CLIC-like protein 1 from Danio rerio (Zebrafish).